We begin with the raw amino-acid sequence, 216 residues long: Small ribosomal subunit protein uS3c (216 aa).

One can recognise a KH type-2 domain in the interval 39–109 (IRSYINRELE…SIRINVIELT (71 aa)).

It belongs to the universal ribosomal protein uS3 family. Part of the 30S ribosomal subunit.

The protein localises to the plastid. Its subcellular location is the chloroplast. This Guillardia theta (Cryptophyte) protein is Small ribosomal subunit protein uS3c (rps3).